Here is a 444-residue protein sequence, read N- to C-terminus: MLDNFIAHQATKEFSVSEISNKIKELLENNFGYIKVKGEISGLKIANSGHAYFNLKENTAILACTCWRPILAKITFPLNDGMEVVISGKLSSYAGNSRYQLSVDNLQPTGLGAMLQILNERKAKLEKEGLFNKIRIPIPFLPDKIGVITSITGAVIKDIIHRIRERFPTRIIIWPVSVQGENSGNEIAEAIEGFNNLEEVNKPRVIIVARGGGSIEDLWSFNDEILVRAAYNSKIPIISAVGHEVDYTLIDLAADKRAPTPTAAAEFAVPVRSILNNTLQSYEKILLNNTSRLIKYHEQNIVNYNKIHRYLSHYINNRQQLLDETGFNLLDALPCFIELQETKIKSFSKERVNPAKIINYKTLELTHQTAYLSKSANNTLKNFEYKLELNSTLLASLDYHNVLKRGFAIVKGETGNFLSSKMTAANEKIFNIKFSDGEIKVVRA.

Belongs to the XseA family. Heterooligomer composed of large and small subunits.

It is found in the cytoplasm. The catalysed reaction is Exonucleolytic cleavage in either 5'- to 3'- or 3'- to 5'-direction to yield nucleoside 5'-phosphates.. In terms of biological role, bidirectionally degrades single-stranded DNA into large acid-insoluble oligonucleotides, which are then degraded further into small acid-soluble oligonucleotides. This chain is Exodeoxyribonuclease 7 large subunit, found in Rickettsia conorii (strain ATCC VR-613 / Malish 7).